We begin with the raw amino-acid sequence, 225 residues long: ATP-dependent dethiobiotin synthetase BioD (225 aa).

An ATP-binding site is contributed by 13–18 (NVGKTL). T17 contributes to the Mg(2+) binding site. Residue K38 is part of the active site. Position 42 (T42) interacts with substrate. Residues D55, 116 to 119 (EGAG), 176 to 177 (NH), and 205 to 207 (PWL) contribute to the ATP site. Residues D55 and E116 each coordinate Mg(2+).

It belongs to the dethiobiotin synthetase family. As to quaternary structure, homodimer. Requires Mg(2+) as cofactor.

It localises to the cytoplasm. It catalyses the reaction (7R,8S)-7,8-diammoniononanoate + CO2 + ATP = (4R,5S)-dethiobiotin + ADP + phosphate + 3 H(+). It participates in cofactor biosynthesis; biotin biosynthesis; biotin from 7,8-diaminononanoate: step 1/2. Functionally, catalyzes a mechanistically unusual reaction, the ATP-dependent insertion of CO2 between the N7 and N8 nitrogen atoms of 7,8-diaminopelargonic acid (DAPA, also called 7,8-diammoniononanoate) to form a ureido ring. The protein is ATP-dependent dethiobiotin synthetase BioD of Baumannia cicadellinicola subsp. Homalodisca coagulata.